Here is a 314-residue protein sequence, read N- to C-terminus: Ribosomal RNA small subunit methyltransferase H (314 aa).

S-adenosyl-L-methionine contacts are provided by residues 34-36 (GGH), D53, F82, D103, and Q110.

The protein belongs to the methyltransferase superfamily. RsmH family.

Its subcellular location is the cytoplasm. It catalyses the reaction cytidine(1402) in 16S rRNA + S-adenosyl-L-methionine = N(4)-methylcytidine(1402) in 16S rRNA + S-adenosyl-L-homocysteine + H(+). Specifically methylates the N4 position of cytidine in position 1402 (C1402) of 16S rRNA. In Limosilactobacillus fermentum (strain NBRC 3956 / LMG 18251) (Lactobacillus fermentum), this protein is Ribosomal RNA small subunit methyltransferase H.